We begin with the raw amino-acid sequence, 125 residues long: Small ribosomal subunit protein uS13 (125 aa).

Residues 92–125 form a disordered region; that stretch reads RRHLPVHGQRTKTNARTRKGPKKTVAGKKKAGKK.

The protein belongs to the universal ribosomal protein uS13 family. As to quaternary structure, part of the 30S ribosomal subunit. Forms a loose heterodimer with protein S19. Forms two bridges to the 50S subunit in the 70S ribosome.

Its function is as follows. Located at the top of the head of the 30S subunit, it contacts several helices of the 16S rRNA. In the 70S ribosome it contacts the 23S rRNA (bridge B1a) and protein L5 of the 50S subunit (bridge B1b), connecting the 2 subunits; these bridges are implicated in subunit movement. Contacts the tRNAs in the A and P-sites. The chain is Small ribosomal subunit protein uS13 from Saccharopolyspora erythraea (strain ATCC 11635 / DSM 40517 / JCM 4748 / NBRC 13426 / NCIMB 8594 / NRRL 2338).